The sequence spans 810 residues: Probable inorganic carbon transporter subunit DabA (810 aa).

The Zn(2+) site is built by cysteine 347, aspartate 349, histidine 509, and cysteine 524.

This sequence belongs to the inorganic carbon transporter (TC 9.A.2) DabA family. In terms of assembly, forms a complex with DabB. Requires Zn(2+) as cofactor.

The protein localises to the cell inner membrane. Its function is as follows. Part of an energy-coupled inorganic carbon pump. This chain is Probable inorganic carbon transporter subunit DabA, found in Marinomonas sp. (strain MWYL1).